A 294-amino-acid polypeptide reads, in one-letter code: Lipoyl synthase (294 aa).

[4Fe-4S] cluster contacts are provided by Cys35, Cys40, Cys46, Cys61, Cys65, Cys68, and Ser275. The Radical SAM core domain maps to 46 to 264; that stretch reads CWGGGTATVM…RDQGLALGFR (219 aa).

The protein belongs to the radical SAM superfamily. Lipoyl synthase family. The cofactor is [4Fe-4S] cluster.

It localises to the cytoplasm. The catalysed reaction is [[Fe-S] cluster scaffold protein carrying a second [4Fe-4S](2+) cluster] + N(6)-octanoyl-L-lysyl-[protein] + 2 oxidized [2Fe-2S]-[ferredoxin] + 2 S-adenosyl-L-methionine + 4 H(+) = [[Fe-S] cluster scaffold protein] + N(6)-[(R)-dihydrolipoyl]-L-lysyl-[protein] + 4 Fe(3+) + 2 hydrogen sulfide + 2 5'-deoxyadenosine + 2 L-methionine + 2 reduced [2Fe-2S]-[ferredoxin]. It functions in the pathway protein modification; protein lipoylation via endogenous pathway; protein N(6)-(lipoyl)lysine from octanoyl-[acyl-carrier-protein]: step 2/2. In terms of biological role, catalyzes the radical-mediated insertion of two sulfur atoms into the C-6 and C-8 positions of the octanoyl moiety bound to the lipoyl domains of lipoate-dependent enzymes, thereby converting the octanoylated domains into lipoylated derivatives. This is Lipoyl synthase from Anaeromyxobacter dehalogenans (strain 2CP-C).